A 336-amino-acid chain; its full sequence is MRPRYSLILSAMRLIRPSNRRLSSIASSDSEFISYMKNKAKSINKALDNSIPLCNNFVPLWEPVLEVHKAMRYTLLPGGKRVRPMLCLVACELVGGQESTAMPAACAVEMIHAASLILDDLPCMDDDSLRRGKPTNHKVFGEKTSILASNALRSLAVKQTLASTSLGVTSERVLRAVQEMARAVGTEGLVAGQAADLAGERMSFKNEDDELRYLELMHVHKTAVLVEAAAVVGAIMGGGSDEEIERLKSYARCVGLMFQVMDDVLDETKSSEELGKTAGKDLITGKLTYPKVMGVDNAREYAKRLNREAQEHLQGFDSDKVVPLLSLADYIVKRQN.

The N-terminal 22 residues, 1–22 (MRPRYSLILSAMRLIRPSNRRL), are a transit peptide targeting the mitochondrion. Positions 80, 83, and 112 each coordinate isopentenyl diphosphate. The Mg(2+) site is built by aspartate 119 and aspartate 125. Position 130 (arginine 130) interacts with dimethylallyl diphosphate. Arginine 131 is an isopentenyl diphosphate binding site. Dimethylallyl diphosphate-binding residues include lysine 221, threonine 222, glutamine 259, lysine 276, and lysine 286.

This sequence belongs to the FPP/GGPP synthase family. In terms of assembly, monomer. It depends on Mg(2+) as a cofactor.

The protein localises to the mitochondrion. The enzyme catalyses isopentenyl diphosphate + dimethylallyl diphosphate = (2E)-geranyl diphosphate + diphosphate. It catalyses the reaction isopentenyl diphosphate + (2E)-geranyl diphosphate = (2E,6E)-farnesyl diphosphate + diphosphate. The catalysed reaction is isopentenyl diphosphate + (2E,6E)-farnesyl diphosphate = (2E,6E,10E)-geranylgeranyl diphosphate + diphosphate. It functions in the pathway isoprenoid biosynthesis; farnesyl diphosphate biosynthesis; farnesyl diphosphate from geranyl diphosphate and isopentenyl diphosphate: step 1/1. The protein operates within isoprenoid biosynthesis; geranyl diphosphate biosynthesis; geranyl diphosphate from dimethylallyl diphosphate and isopentenyl diphosphate: step 1/1. Its pathway is isoprenoid biosynthesis; geranylgeranyl diphosphate biosynthesis; geranylgeranyl diphosphate from farnesyl diphosphate and isopentenyl diphosphate: step 1/1. Catalyzes the trans-addition of the three molecules of IPP onto DMAPP to form geranylgeranyl pyrophosphate. The polypeptide is Geranylgeranyl pyrophosphate synthase 6, mitochondrial (Arabidopsis thaliana (Mouse-ear cress)).